Reading from the N-terminus, the 459-residue chain is Cyclin-dependent kinase F-4 (459 aa).

Residues phenylalanine 4–phenylalanine 283 enclose the Protein kinase domain. Residues valine 10–valine 18 and lysine 33 each bind ATP. The active-site Proton acceptor is the aspartate 125. Serine 151 carries the phosphoserine modification. Threonine 156 is subject to Phosphothreonine. The tract at residues lysine 310–glycine 397 is disordered. 2 stretches are compositionally biased toward polar residues: residues serine 322–glycine 346 and glutamate 366–arginine 375.

It belongs to the protein kinase superfamily. CMGC Ser/Thr protein kinase family. CDC2/CDKX subfamily.

It carries out the reaction L-seryl-[protein] + ATP = O-phospho-L-seryl-[protein] + ADP + H(+). It catalyses the reaction L-threonyl-[protein] + ATP = O-phospho-L-threonyl-[protein] + ADP + H(+). The enzyme catalyses [DNA-directed RNA polymerase] + ATP = phospho-[DNA-directed RNA polymerase] + ADP + H(+). The protein is Cyclin-dependent kinase F-4 (CDKF-4) of Oryza sativa subsp. japonica (Rice).